The primary structure comprises 1252 residues: HEAT repeat-containing protein 6 (1252 aa).

Residues 230 to 269 form an HEAT 1 repeat; the sequence is PDLLGKSGLLMKLSDVTHSDPEVRRAAVHCMANLCLSVPG. Positions 365–417 are disordered; the sequence is DGRSPVKPQQPESSAARPSANKKKKYKVKPKKTQQGEKAEEEEPYGEVDAAPG. Over residues 384–396 the composition is skewed to basic residues; sequence ANKKKKYKVKPKK. 2 positions are modified to phosphoserine: Ser471 and Ser474. HEAT repeat units follow at residues 524-562, 586-624, and 630-667; these read ELGS…GSKQ, SSIR…NAPY, and SLLT…THAP. Thr689 bears the Phosphothreonine mark. At Ser714 the chain carries Phosphoserine.

The protein is HEAT repeat-containing protein 6 (Heatr6) of Rattus norvegicus (Rat).